Consider the following 218-residue polypeptide: Peptidase E (218 aa).

Catalysis depends on charge relay system residues S123, D138, and H160.

The protein belongs to the peptidase S51 family.

Its subcellular location is the cytoplasm. It carries out the reaction Dipeptidase E catalyzes the hydrolysis of dipeptides Asp-|-Xaa. It does not act on peptides with N-terminal Glu, Asn or Gln, nor does it cleave isoaspartyl peptides.. In terms of biological role, hydrolyzes dipeptides containing N-terminal aspartate residues. May play a role in allowing the cell to use peptide aspartate to spare carbon otherwise required for the synthesis of the aspartate family of amino acids. This chain is Peptidase E, found in Haemophilus influenzae (strain ATCC 51907 / DSM 11121 / KW20 / Rd).